Consider the following 390-residue polypeptide: Anhydro-N-acetylmuramic acid kinase (390 aa).

Residue Gly9–Asp16 participates in ATP binding.

This sequence belongs to the anhydro-N-acetylmuramic acid kinase family.

The catalysed reaction is 1,6-anhydro-N-acetyl-beta-muramate + ATP + H2O = N-acetyl-D-muramate 6-phosphate + ADP + H(+). Its pathway is amino-sugar metabolism; 1,6-anhydro-N-acetylmuramate degradation. It functions in the pathway cell wall biogenesis; peptidoglycan recycling. In terms of biological role, catalyzes the specific phosphorylation of 1,6-anhydro-N-acetylmuramic acid (anhMurNAc) with the simultaneous cleavage of the 1,6-anhydro ring, generating MurNAc-6-P. Is required for the utilization of anhMurNAc either imported from the medium or derived from its own cell wall murein, and thus plays a role in cell wall recycling. The polypeptide is Anhydro-N-acetylmuramic acid kinase (Bacillus cereus (strain ATCC 14579 / DSM 31 / CCUG 7414 / JCM 2152 / NBRC 15305 / NCIMB 9373 / NCTC 2599 / NRRL B-3711)).